Reading from the N-terminus, the 156-residue chain is Small ribosomal subunit protein uS7 (156 aa).

Belongs to the universal ribosomal protein uS7 family. As to quaternary structure, part of the 30S ribosomal subunit. Contacts proteins S9 and S11.

Its function is as follows. One of the primary rRNA binding proteins, it binds directly to 16S rRNA where it nucleates assembly of the head domain of the 30S subunit. Is located at the subunit interface close to the decoding center, probably blocks exit of the E-site tRNA. The chain is Small ribosomal subunit protein uS7 from Carsonella ruddii (strain PV).